A 375-amino-acid chain; its full sequence is MTPIVFIDRDGTLIEEPPDFQIDAYEKLRLVNGVIPALLKLRDAGYHFVIVTNQDGLGSPTYPQASFDGPNALMLQIFSSQGIVFRDVLIDRSWPADNAPTRKPGIGLMVAYLQDRDIDWARSAMVGDRPTDLQFAENLNIRGFQLRTPQFGGDWDWDGIAHTLADAPRRAVVQRHTKETNIRVEIDLDGAPQARITTGLPFFDHMLEQIAKHAGISLHISAVGDLHIDEHHTIEDTGLALGQAVRQALGDKRGIGRYGFDPPQLPWQVSGAAAHGGFTLPMDETQASAVLDFSGRPYFVFEGTFVRERVGDMPTELVPHFFRSLCDASGMNLHLSVHGDNDHHKVEACFKALARALRQALQRHGHVLPSTKGAL.

A histidinol-phosphatase region spans residues 1 to 168; that stretch reads MTPIVFIDRD…GIAHTLADAP (168 aa). D8 (nucleophile) is an active-site residue. The Mg(2+) site is built by D8, D10, and D128. The active-site Proton donor is the D10. An imidazoleglycerol-phosphate dehydratase region spans residues 169 to 375; sequence RRAVVQRHTK…HVLPSTKGAL (207 aa).

It in the N-terminal section; belongs to the histidinol-phosphatase family. The protein in the C-terminal section; belongs to the imidazoleglycerol-phosphate dehydratase family. The cofactor is Mg(2+).

Its subcellular location is the cytoplasm. It catalyses the reaction D-erythro-1-(imidazol-4-yl)glycerol 3-phosphate = 3-(imidazol-4-yl)-2-oxopropyl phosphate + H2O. It carries out the reaction L-histidinol phosphate + H2O = L-histidinol + phosphate. It functions in the pathway amino-acid biosynthesis; L-histidine biosynthesis; L-histidine from 5-phospho-alpha-D-ribose 1-diphosphate: step 6/9. The protein operates within amino-acid biosynthesis; L-histidine biosynthesis; L-histidine from 5-phospho-alpha-D-ribose 1-diphosphate: step 8/9. This chain is Histidine biosynthesis bifunctional protein HisB, found in Xylella fastidiosa (strain Temecula1 / ATCC 700964).